Consider the following 274-residue polypeptide: Dehydration-responsive element-binding protein 2A (274 aa).

Basic and acidic residues-rich tracts occupy residues 1 to 10 (MERGEGRRGD) and 35 to 50 (KWWKEQNQKLQEENSS). The tract at residues 1–75 (MERGEGRRGD…KGGPENSNCA (75 aa)) is disordered. Positions 75-132 (AYRGVRQRTWGKWVAEIREPNRGRRLWLGSFPTALEAAHAYDEAARAMYGPTARVNFA) form a DNA-binding region, AP2/ERF.

Belongs to the AP2/ERF transcription factor family. ERF subfamily.

Its subcellular location is the nucleus. Transcriptional activator that binds specifically to the DNA sequence 5'-[AG]CCGAC-3'. Binding to the C-repeat/DRE element mediates high salinity- and dehydration-inducible transcription. The chain is Dehydration-responsive element-binding protein 2A (DREB2A) from Oryza sativa subsp. indica (Rice).